The sequence spans 300 residues: Endonuclease III-like protein 1 (300 aa).

The transit peptide at 1-19 (MNSGVRMVTRSRSRATRIA) directs the protein to the mitochondrion. The interval 1–53 (MNSGVRMVTRSRSRATRIASEGCREELAPREAAAEGRKSHRPVRHPRRTQKTH) is disordered. Over residues 22–37 (GCREELAPREAAAEGR) the composition is skewed to basic and acidic residues. Basic residues predominate over residues 38–51 (KSHRPVRHPRRTQK). One can recognise a HhH domain in the interval 187–211 (RYEGDIPASVAELVALPGVGPKMAH). Residue lysine 208 is the Nucleophile; for N-glycosylase activity of the active site. Residues cysteine 278, cysteine 285, cysteine 288, and cysteine 294 each contribute to the [4Fe-4S] cluster site.

It belongs to the Nth/MutY family. As to quaternary structure, interacts with YBX1. Interacts with ERCC5/XPG; the interaction stimulates NTHL1 activity and NTHL1 binding to its DNA substrate. It depends on [4Fe-4S] cluster as a cofactor. Post-translationally, ubiquitinated by TRIM26; leading to proteasomal degradation. In terms of tissue distribution, widely expressed.

The protein localises to the nucleus. It localises to the mitochondrion. It catalyses the reaction 2'-deoxyribonucleotide-(2'-deoxyribose 5'-phosphate)-2'-deoxyribonucleotide-DNA = a 3'-end 2'-deoxyribonucleotide-(2,3-dehydro-2,3-deoxyribose 5'-phosphate)-DNA + a 5'-end 5'-phospho-2'-deoxyribonucleoside-DNA + H(+). Bifunctional DNA N-glycosylase with associated apurinic/apyrimidinic (AP) lyase function that catalyzes the first step in base excision repair (BER), the primary repair pathway for the repair of oxidative DNA damage. The DNA N-glycosylase activity releases the damaged DNA base from DNA by cleaving the N-glycosidic bond, leaving an AP site. The AP lyase activity cleaves the phosphodiester bond 3' to the AP site by a beta-elimination. Primarily recognizes and repairs oxidative base damage of pyrimidines. The polypeptide is Endonuclease III-like protein 1 (Nthl1) (Mus musculus (Mouse)).